The following is a 400-amino-acid chain: ATP-dependent rRNA helicase RRP3 (400 aa).

The short motif at 1–29 (MEFGDLRIDESLIKTCQEKGITRPTEVQR) is the Q motif element. The region spanning 32-202 (IPAVLGGGDV…SSILKRPKTI (171 aa)) is the Helicase ATP-binding domain. 45–52 (SQTGSGKT) is a binding site for ATP. Residues 150–153 (DEAD) carry the DEAD box motif. Residues 229–373 (ALVELLEMSQ…EFKMMKKNFG (145 aa)) form the Helicase C-terminal domain.

This sequence belongs to the DEAD box helicase family. DDX47/RRP3 subfamily. As to quaternary structure, interacts with the SSU processome.

It is found in the nucleus. The enzyme catalyses ATP + H2O = ADP + phosphate + H(+). Its function is as follows. ATP-dependent rRNA helicase required for pre-ribosomal RNA processing. Involved in the maturation of the 35S-pre-rRNA and to its cleavage to mature 18S rRNA. This is ATP-dependent rRNA helicase RRP3 from Encephalitozoon cuniculi (strain GB-M1) (Microsporidian parasite).